The following is a 284-amino-acid chain: Nucleotide-binding protein in ptsO 5'region (284 aa).

ATP is bound at residue Gly8–Ser15. Asp60 to Asn63 contacts GTP.

This sequence belongs to the RapZ-like family.

Functionally, displays ATPase and GTPase activities. The protein is Nucleotide-binding protein in ptsO 5'region of Pseudomonas putida (Arthrobacter siderocapsulatus).